A 69-amino-acid chain; its full sequence is ATP synthase F(0) complex subunit e, mitochondrial (69 aa).

Lysine 34 is subject to N6-acetyllysine. Serine 66 bears the Phosphoserine mark.

It belongs to the ATPase e subunit family. Component of the ATP synthase complex composed at least of ATP5F1A/subunit alpha, ATP5F1B/subunit beta, ATP5MC1/subunit c (homooctomer), MT-ATP6/subunit a, MT-ATP8/subunit 8, ATP5ME/subunit e, ATP5MF/subunit f, ATP5MG/subunit g, ATP5MK/subunit k, ATP5MJ/subunit j, ATP5F1C/subunit gamma, ATP5F1D/subunit delta, ATP5F1E/subunit epsilon, ATP5PF/subunit F6, ATP5PB/subunit b, ATP5PD/subunit d, ATP5PO/subunit OSCP. ATP synthase complex consists of a soluble F(1) head domain (subunits alpha(3) and beta(3)) - the catalytic core - and a membrane F(0) domain - the membrane proton channel (subunits c, a, 8, e, f, g, k and j). These two domains are linked by a central stalk (subunits gamma, delta, and epsilon) rotating inside the F1 region and a stationary peripheral stalk (subunits F6, b, d, and OSCP).

It is found in the mitochondrion. The protein resides in the mitochondrion inner membrane. Functionally, subunit e, of the mitochondrial membrane ATP synthase complex (F(1)F(0) ATP synthase or Complex V) that produces ATP from ADP in the presence of a proton gradient across the membrane which is generated by electron transport complexes of the respiratory chain. ATP synthase complex consist of a soluble F(1) head domain - the catalytic core - and a membrane F(1) domain - the membrane proton channel. These two domains are linked by a central stalk rotating inside the F(1) region and a stationary peripheral stalk. During catalysis, ATP synthesis in the catalytic domain of F(1) is coupled via a rotary mechanism of the central stalk subunits to proton translocation. In vivo, can only synthesize ATP although its ATP hydrolase activity can be activated artificially in vitro. Part of the complex F(0) domain. This Homo sapiens (Human) protein is ATP synthase F(0) complex subunit e, mitochondrial.